Reading from the N-terminus, the 407-residue chain is S-adenosylmethionine synthase (407 aa).

His19 serves as a coordination point for ATP. Asp21 contacts Mg(2+). Position 47 (Glu47) interacts with K(+). 2 residues coordinate L-methionine: Glu60 and Gln103. The interval 103 to 113 is flexible loop; the sequence is QSQEIADGVDT. Residues 108–131 are disordered; that stretch reads ADGVDTSQEARGDGHFEEDDRAGA. Residues 178–180, Asp258, 264–265, Ala281, and Lys285 each bind ATP; these read DGK and RK. Residue Asp258 participates in L-methionine binding. Lys289 contributes to the L-methionine binding site.

It belongs to the AdoMet synthase family. Homotetramer; dimer of dimers. The cofactor is Mg(2+). Requires K(+) as cofactor.

The protein localises to the cytoplasm. It catalyses the reaction L-methionine + ATP + H2O = S-adenosyl-L-methionine + phosphate + diphosphate. It participates in amino-acid biosynthesis; S-adenosyl-L-methionine biosynthesis; S-adenosyl-L-methionine from L-methionine: step 1/1. In terms of biological role, catalyzes the formation of S-adenosylmethionine (AdoMet) from methionine and ATP. The overall synthetic reaction is composed of two sequential steps, AdoMet formation and the subsequent tripolyphosphate hydrolysis which occurs prior to release of AdoMet from the enzyme. In Corynebacterium efficiens (strain DSM 44549 / YS-314 / AJ 12310 / JCM 11189 / NBRC 100395), this protein is S-adenosylmethionine synthase.